The chain runs to 115 residues: NADH-ubiquinone oxidoreductase chain 3 (115 aa).

Helical transmembrane passes span 3–23, 55–75, and 87–107; these read LMLT…IAFW, FFLV…LLPL, and VLFM…YEWI.

It belongs to the complex I subunit 3 family. In terms of assembly, core subunit of respiratory chain NADH dehydrogenase (Complex I) which is composed of 45 different subunits. Interacts with TMEM186. Interacts with TMEM242.

The protein resides in the mitochondrion inner membrane. The enzyme catalyses a ubiquinone + NADH + 5 H(+)(in) = a ubiquinol + NAD(+) + 4 H(+)(out). Core subunit of the mitochondrial membrane respiratory chain NADH dehydrogenase (Complex I) which catalyzes electron transfer from NADH through the respiratory chain, using ubiquinone as an electron acceptor. Essential for the catalytic activity of complex I. This chain is NADH-ubiquinone oxidoreductase chain 3, found in Dugong dugon (Dugong).